Consider the following 925-residue polypeptide: Aspulvinone E synthetase melA (925 aa).

The tract at residues 11-434 is adenylation (A) domain; that stretch reads ETAAARNGDG…GGRAKETIII (424 aa). In terms of domain architecture, Carrier spans 564–644; sequence SPKNDFEKGL…ELAAALDNLY (81 aa). O-(pantetheine 4'-phosphoryl)serine is present on S601. The tract at residues 663-923 is thioesterase (TE) domain; that stretch reads PLWLVHPGAG…KILRSALAER (261 aa).

This sequence belongs to the NRP synthetase family.

The protein localises to the cytoplasm. The catalysed reaction is 2 3-(4-hydroxyphenyl)pyruvate + AH2 + 2 ATP + O2 = aspulvinone E + A + 2 AMP + CO2 + 2 diphosphate + H2O + H(+). Nonribosomal peptide synthase; part of the gene cluster that mediates the biosynthesis of Asp-melanin, a pigment that confers resistance against UV light and hampers phagocytosis by soil amoeba. The nonribosomal peptide synthase melA converts 4-hydroxyphenylpyruvate (4-HPPA) to aspulvinone E. The tyrosinase tyrP then performs hydroxylations of both aromatic moieties of aspulvinone E. The product of tyrP is highly unstable, and, due to the high reactivity of methides and ortho-diquinones, the polymeric Asp-melanin forms spontaneously. The polypeptide is Aspulvinone E synthetase melA (Aspergillus terreus (strain NIH 2624 / FGSC A1156)).